We begin with the raw amino-acid sequence, 107 residues long: Iron-binding protein IscA (107 aa).

3 residues coordinate Fe cation: C35, C99, and C101.

The protein belongs to the HesB/IscA family. As to quaternary structure, homodimer; may form tetramers and higher multimers. It depends on Fe cation as a cofactor.

In terms of biological role, is able to transfer iron-sulfur clusters to apo-ferredoxin. Multiple cycles of [2Fe2S] cluster formation and transfer are observed, suggesting that IscA acts catalytically. Recruits intracellular free iron so as to provide iron for the assembly of transient iron-sulfur cluster in IscU in the presence of IscS, L-cysteine and the thioredoxin reductase system TrxA/TrxB. This chain is Iron-binding protein IscA, found in Photorhabdus laumondii subsp. laumondii (strain DSM 15139 / CIP 105565 / TT01) (Photorhabdus luminescens subsp. laumondii).